Reading from the N-terminus, the 256-residue chain is Homeobox-leucine zipper protein HOX18 (256 aa).

The interval 52-116 (YDHGRDEEQA…GGGGGGTRKK (65 aa)) is disordered. Over residues 102–112 (DGGSGGGGGGG) the composition is skewed to gly residues. Residues 112 to 171 (GTRKKLQLTKEQSTLLEDSFRVHNILSHAQKHELARQLKLKPRQVEVWFQNRRARTKLKQ) constitute a DNA-binding region (homeobox). The interval 170 to 214 (KQTEVDCEFLKRCCESLTEENKQLKHELMELRRLASPAAAAAGSQ) is leucine-zipper.

Belongs to the HD-ZIP homeobox family. Class II subfamily. Expressed in roots, leaf sheaths and blades and panicles.

It localises to the nucleus. Probable transcription factor. In Oryza sativa subsp. japonica (Rice), this protein is Homeobox-leucine zipper protein HOX18 (HOX18).